The following is a 387-amino-acid chain: MAAFASGLAIIFNSPSLNPVTTQATFLSSNRIRSSPRVFSGFHSLRRRGFRRFSQNVIPDRFNSFSCNCLSAVSTSTIDYEFTDGGKEVELRLRLKTGEILSPKDISVDADGTSLAVKEKRNGLLITLLETNHLFEKIMPSETIWYIDEDQLVVNMKKVDGELKWPDIVESWESLTAGMMQLLKGASIYIVGDSTEINQKVSRELAVGLGYSPLDSKELLESFSKQTIDSWILAEGPDSVAEAESSVLESLSSHVRTVVSTLGGKHGAAGRADQWRHLYSGFTVWVSQTEATDEESAKEEARRSKQEREIGYSNADVVVKLQGWDPTHAKSVAQASLSALKQLIISDKGLPGKKSLYIRLGCRGDWPNIKPPGWDPSSDTGPHPQFT.

Residues 1–71 constitute a chloroplast transit peptide; that stretch reads MAAFASGLAI…FNSFSCNCLS (71 aa). The segment at 368–387 is disordered; the sequence is NIKPPGWDPSSDTGPHPQFT.

Belongs to the shikimate kinase family.

Its subcellular location is the plastid. The protein localises to the chloroplast. This chain is Probable inactive shikimate kinase like 2, chloroplastic (SKL2), found in Arabidopsis thaliana (Mouse-ear cress).